Here is a 103-residue protein sequence, read N- to C-terminus: Small ribosomal subunit protein uS10 (103 aa).

It belongs to the universal ribosomal protein uS10 family. As to quaternary structure, part of the 30S ribosomal subunit.

In terms of biological role, involved in the binding of tRNA to the ribosomes. The chain is Small ribosomal subunit protein uS10 from Chlorobium luteolum (strain DSM 273 / BCRC 81028 / 2530) (Pelodictyon luteolum).